A 959-amino-acid polypeptide reads, in one-letter code: MSDKTNDDKTLSVNPKKTLTLKRPGVEQSTVRQNFSHGRTKAVVVETKKRKFSRPDEKPEVEAAAAPKPAAPAAAPQQAPASAPVSASAAQASAPQPAPVKAPATKAPAAPSAPVTKPHVAQQRPVHQRPGGQQAQRPRPADRSGMVLNTLSRSEMDARRRALEEAQIREVEERARAVEEAKRRAEEDARRAKEHEESARRQAEEEARLKAEAEARRKAEEEAAKRMPQPEARSERRDDARPAPYGARPQQAGRPQGGRPQPAGRPQQGSPRPAPIIADAAPIAGKPLPQSQLRKPGQSDDDDDRRSGAARRGVAAKPEVRAPKVVKGEDDRRRGKLTLTSNLEEEGRSRSLSAMRRRQEKFKRSQMQETREKISREVTIPETITLQELAQRMAERSVDIIKYLMKQGQMMKPGDVIDADTAQLIAEEFGHTVKRVAESDVEEGIFDVADNESAMVSRPPVVTIMGHVDHGKTSLLDAIRHANVVSGEAGGITQHIGAYQVVQNGQKITFIDTPGHAAFTAMRARGAQATDIAILVVAADDSVMPQTIESINHAKAAGVPIIVAINKIDKPAADPQKVRTALLQHEVFVESMGGEVLDVEVSAKNKINLDKLLDAVLLQAEMLDLKADPDRTAEGVVIEAQLDRGRGSVATVLIQKGTLHPGDILVAGSEWGRVRALVNDRGEHVKEAGPAMPVEILGLQGTPQAGDRFAVVANEAKAREIAEYRQRLARDKAVARQSGARGSLEQMMNQLQVSGTKEFPLVIKGDVQGSIEAITNALDKLGTDEVRARIVHSGAGGITESDVSLAEASNAAIIGFNVRANKQARDSAEQQGIEIRYYNIIYDLIDDVKAAMSGLLSPERRETFLGNAEILEVFNITKVGKVAGCRVTEGKVERGAGVRLIRDNVVIHEGKLKTLKRFKDEVAEVPSGQECGMAFENYDDIRAGDVIEAFRVEHVSRTL.

Basic and acidic residues predominate over residues Met-1 to Thr-10. The interval Met-1–Ile-374 is disordered. The segment covering Glu-27–His-37 has biased composition (polar residues). Composition is skewed to low complexity over residues Ala-63–Pro-118 and Gln-128–Pro-138. 2 stretches are compositionally biased toward basic and acidic residues: residues Ser-154–Lys-225 and Ala-232–Arg-241. Low complexity predominate over residues Gly-246 to Ala-284. A compositionally biased stretch (basic and acidic residues) spans Pro-318–Arg-333. The tr-type G domain occupies Ser-457–Lys-626. The interval Gly-466–Thr-473 is G1. GTP is bound at residue Gly-466 to Thr-473. A G2 region spans residues Gly-491–His-495. A G3 region spans residues Asp-512–Gly-515. Residues Asp-512–His-516 and Asn-566–Asp-569 contribute to the GTP site. The interval Asn-566–Asp-569 is G4. The segment at Ser-602 to Lys-604 is G5.

It belongs to the TRAFAC class translation factor GTPase superfamily. Classic translation factor GTPase family. IF-2 subfamily.

Its subcellular location is the cytoplasm. Its function is as follows. One of the essential components for the initiation of protein synthesis. Protects formylmethionyl-tRNA from spontaneous hydrolysis and promotes its binding to the 30S ribosomal subunits. Also involved in the hydrolysis of GTP during the formation of the 70S ribosomal complex. This Brucella melitensis biotype 1 (strain ATCC 23456 / CCUG 17765 / NCTC 10094 / 16M) protein is Translation initiation factor IF-2.